The chain runs to 746 residues: Polyribonucleotide nucleotidyltransferase (746 aa).

Residues aspartate 520 and aspartate 526 each coordinate Mg(2+). In terms of domain architecture, KH spans 586–648; sequence PRIITVKVPV…EAARAAVNAI (63 aa). The S1 motif domain occupies 657–729; it reads GERYLGTVVK…PRGKLSLVPV (73 aa).

Belongs to the polyribonucleotide nucleotidyltransferase family. The cofactor is Mg(2+).

It localises to the cytoplasm. It catalyses the reaction RNA(n+1) + phosphate = RNA(n) + a ribonucleoside 5'-diphosphate. Its function is as follows. Involved in mRNA degradation. Catalyzes the phosphorolysis of single-stranded polyribonucleotides processively in the 3'- to 5'-direction. This is Polyribonucleotide nucleotidyltransferase from Kineococcus radiotolerans (strain ATCC BAA-149 / DSM 14245 / SRS30216).